A 301-amino-acid polypeptide reads, in one-letter code: Glycine--tRNA ligase alpha subunit (301 aa).

Belongs to the class-II aminoacyl-tRNA synthetase family. In terms of assembly, tetramer of two alpha and two beta subunits.

It is found in the cytoplasm. It carries out the reaction tRNA(Gly) + glycine + ATP = glycyl-tRNA(Gly) + AMP + diphosphate. The chain is Glycine--tRNA ligase alpha subunit from Proteus mirabilis (strain HI4320).